The chain runs to 207 residues: Calcipressin-like protein (207 aa).

A required for tax-6 interaction region spans residues 176–181; the sequence is PAIIVH.

The protein belongs to the RCAN family. In terms of assembly, interacts with tax-6 (via catalytic domain); the interaction is calcium-dependent. Expressed in lateral hypodermal cells, marginal cells of the pharynx, vulva epithelial cells, ventral and dorsal nerve cords and commissures and various neurons in the anterior and posterior regions. Expressed in male tail structures including the diagonal muscles, sensory rays and spicules. Expressed in PHC neurons and most tail neurons and support cells of the phasmid neurons. Also expressed in pharyngeal muscle, head neurons, excretory canal cells and hypodermal seam cells.

Its function is as follows. Inhibits tax-6/calcineurin A phosphatase activity and thereby negatively regulates calcineurin-mediated functions. Plays a role in modulating temperature-dependent calcium responses in AFD neurons and in addition, also negatively regulates thermotaxis in a tax-6-dependent manner in AFD neurons. In response to changes in intracellular calcium levels may also regulate nuclear translocation of transcriptional regulators such as crtc-1. May play a role in regulating body size. Plays a role in male tail tip morphogenesis. The polypeptide is Calcipressin-like protein (Caenorhabditis elegans).